The primary structure comprises 65 residues: Large ribosomal subunit protein bL35c (65 aa).

Residues 18 to 50 (SSGKILRHKASKSHLLQKKSSKHRRHLSSTCQV) are disordered. Residues 22-44 (ILRHKASKSHLLQKKSSKHRRHL) are compositionally biased toward basic residues.

Belongs to the bacterial ribosomal protein bL35 family.

The protein resides in the plastid. Its subcellular location is the chloroplast. In Porphyra purpurea (Red seaweed), this protein is Large ribosomal subunit protein bL35c.